Consider the following 117-residue polypeptide: MPRVKTGTNRRRRHKKVLKLAKGYRGTKGNLFRIANQQVMKSLTYAYRDRKQRKREFRRLWISRINAACRQNGISYNKFINGLKKAGVEINRKMLADMAVNDEQAFGELVDLAKKSV.

It belongs to the bacterial ribosomal protein bL20 family.

Its function is as follows. Binds directly to 23S ribosomal RNA and is necessary for the in vitro assembly process of the 50S ribosomal subunit. It is not involved in the protein synthesizing functions of that subunit. The chain is Large ribosomal subunit protein bL20 from Natranaerobius thermophilus (strain ATCC BAA-1301 / DSM 18059 / JW/NM-WN-LF).